The sequence spans 448 residues: Phosphohexose mutases (448 aa).

Ser-97 (phosphoserine intermediate) is an active-site residue. Ser-97, Asp-237, Asp-239, and Asp-241 together coordinate Mg(2+).

It belongs to the phosphohexose mutase family. Requires Mg(2+) as cofactor.

The enzyme catalyses alpha-D-glucose 1-phosphate = alpha-D-glucose 6-phosphate. It carries out the reaction alpha-D-mannose 1-phosphate = D-mannose 6-phosphate. The protein operates within nucleotide-sugar biosynthesis; GDP-alpha-D-mannose biosynthesis; alpha-D-mannose 1-phosphate from D-fructose 6-phosphate: step 2/2. In terms of biological role, involved in xanthan production. This is Phosphohexose mutases (xanA) from Xanthomonas campestris pv. campestris (strain ATCC 33913 / DSM 3586 / NCPPB 528 / LMG 568 / P 25).